The chain runs to 412 residues: Cytochrome P450-SOY (412 aa).

The segment covering 1-25 (MTESTTDPARQNLDPTSPAPATSFP) has biased composition (polar residues). Positions 1-38 (MTESTTDPARQNLDPTSPAPATSFPQDRGCPYHPPAGY) are disordered. Cys361 provides a ligand contact to heme.

The protein belongs to the cytochrome P450 family. It depends on heme as a cofactor.

It localises to the cytoplasm. This is Cytochrome P450-SOY (cyp105D1) from Streptomyces griseus.